The sequence spans 130 residues: Small ribosomal subunit protein uS8 (130 aa).

The protein belongs to the universal ribosomal protein uS8 family. Part of the 30S ribosomal subunit. Contacts proteins S5 and S12.

Its function is as follows. One of the primary rRNA binding proteins, it binds directly to 16S rRNA central domain where it helps coordinate assembly of the platform of the 30S subunit. In Buchnera aphidicola subsp. Schizaphis graminum (strain Sg), this protein is Small ribosomal subunit protein uS8.